A 201-amino-acid polypeptide reads, in one-letter code: 3-isopropylmalate dehydratase small subunit (201 aa).

Belongs to the LeuD family. LeuD type 1 subfamily. In terms of assembly, heterodimer of LeuC and LeuD.

The catalysed reaction is (2R,3S)-3-isopropylmalate = (2S)-2-isopropylmalate. It functions in the pathway amino-acid biosynthesis; L-leucine biosynthesis; L-leucine from 3-methyl-2-oxobutanoate: step 2/4. Its function is as follows. Catalyzes the isomerization between 2-isopropylmalate and 3-isopropylmalate, via the formation of 2-isopropylmaleate. In Shigella flexneri serotype 5b (strain 8401), this protein is 3-isopropylmalate dehydratase small subunit.